Consider the following 499-residue polypeptide: Glutamate--tRNA ligase (499 aa).

Positions 10–20 (PSPTGTPHVGM) match the 'HIGH' region motif. The 'KMSKS' region motif lies at 255-259 (KLSKR). An ATP-binding site is contributed by lysine 258.

The protein belongs to the class-I aminoacyl-tRNA synthetase family. Glutamate--tRNA ligase type 1 subfamily. As to quaternary structure, monomer.

Its subcellular location is the cytoplasm. It catalyses the reaction tRNA(Glu) + L-glutamate + ATP = L-glutamyl-tRNA(Glu) + AMP + diphosphate. Functionally, catalyzes the attachment of glutamate to tRNA(Glu) in a two-step reaction: glutamate is first activated by ATP to form Glu-AMP and then transferred to the acceptor end of tRNA(Glu). The chain is Glutamate--tRNA ligase from Corynebacterium urealyticum (strain ATCC 43042 / DSM 7109).